The sequence spans 273 residues: NAD-dependent protein deacylase (273 aa).

Residues 20 to 272 (RERLRQRIFF…PEFVEKLLKG (253 aa)) enclose the Deacetylase sirtuin-type domain. 48–67 (GAGISAESGIRTFRAADGLW) contacts NAD(+). 2 residues coordinate substrate: Tyr92 and Arg95. 129 to 132 (QNID) serves as a coordination point for NAD(+). His147 (proton acceptor) is an active-site residue. Residues Cys155 and Cys174 each contribute to the Zn(2+) site. Residues 214-216 (GTS), 240-242 (NLE), and Ala258 each bind NAD(+).

It belongs to the sirtuin family. Class III subfamily. Zn(2+) serves as cofactor.

It localises to the cytoplasm. The enzyme catalyses N(6)-acetyl-L-lysyl-[protein] + NAD(+) + H2O = 2''-O-acetyl-ADP-D-ribose + nicotinamide + L-lysyl-[protein]. The catalysed reaction is N(6)-succinyl-L-lysyl-[protein] + NAD(+) + H2O = 2''-O-succinyl-ADP-D-ribose + nicotinamide + L-lysyl-[protein]. It carries out the reaction N(6)-(2-hydroxyisobutanoyl)-L-lysyl-[protein] + NAD(+) + H2O = 2''-O-(2-hydroxyisobutanoyl)-ADP-D-ribose + nicotinamide + L-lysyl-[protein]. In terms of biological role, NAD-dependent lysine deacetylase that specifically removes acetyl groups on target proteins. Also acts as a protein-lysine deacylase by mediating protein desuccinylation and de-2-hydroxyisobutyrylation. Modulates the activities of several proteins which are inactive in their acylated form. This is NAD-dependent protein deacylase from Escherichia coli O6:H1 (strain CFT073 / ATCC 700928 / UPEC).